The primary structure comprises 422 residues: Enolase (422 aa).

Glutamine 162 is a (2R)-2-phosphoglycerate binding site. The Proton donor role is filled by glutamate 204. Mg(2+)-binding residues include aspartate 241, glutamate 284, and aspartate 311. Residues lysine 336, arginine 365, serine 366, and lysine 387 each coordinate (2R)-2-phosphoglycerate. Catalysis depends on lysine 336, which acts as the Proton acceptor.

The protein belongs to the enolase family. Mg(2+) serves as cofactor.

Its subcellular location is the cytoplasm. The protein resides in the secreted. The protein localises to the cell surface. It carries out the reaction (2R)-2-phosphoglycerate = phosphoenolpyruvate + H2O. It functions in the pathway carbohydrate degradation; glycolysis; pyruvate from D-glyceraldehyde 3-phosphate: step 4/5. Its function is as follows. Catalyzes the reversible conversion of 2-phosphoglycerate (2-PG) into phosphoenolpyruvate (PEP). It is essential for the degradation of carbohydrates via glycolysis. The protein is Enolase of Bartonella tribocorum (strain CIP 105476 / IBS 506).